The sequence spans 488 residues: Glutamyl-tRNA(Gln) amidotransferase subunit A (488 aa).

Active-site charge relay system residues include Lys78 and Ser153. The Acyl-ester intermediate role is filled by Ser177.

This sequence belongs to the amidase family. GatA subfamily. Heterotrimer of A, B and C subunits.

The enzyme catalyses L-glutamyl-tRNA(Gln) + L-glutamine + ATP + H2O = L-glutaminyl-tRNA(Gln) + L-glutamate + ADP + phosphate + H(+). Its function is as follows. Allows the formation of correctly charged Gln-tRNA(Gln) through the transamidation of misacylated Glu-tRNA(Gln) in organisms which lack glutaminyl-tRNA synthetase. The reaction takes place in the presence of glutamine and ATP through an activated gamma-phospho-Glu-tRNA(Gln). This chain is Glutamyl-tRNA(Gln) amidotransferase subunit A, found in Solidesulfovibrio magneticus (strain ATCC 700980 / DSM 13731 / RS-1) (Desulfovibrio magneticus).